A 367-amino-acid polypeptide reads, in one-letter code: uncharacterized protein (367 aa).

To M.tuberculosis Rv0502.

This is an uncharacterized protein from Mycobacterium leprae (strain TN).